A 669-amino-acid polypeptide reads, in one-letter code: DNA ligase (669 aa).

Residues 32–36 (DAEYD), 81–82 (SL), and glutamate 113 contribute to the NAD(+) site. Lysine 115 (N6-AMP-lysine intermediate) is an active-site residue. The NAD(+) site is built by arginine 136, glutamate 173, lysine 290, and lysine 314. 4 residues coordinate Zn(2+): cysteine 408, cysteine 411, cysteine 426, and cysteine 432. A BRCT domain is found at 592–669 (AVDSALAGKI…DEQALIEFLK (78 aa)).

Belongs to the NAD-dependent DNA ligase family. LigA subfamily. Mg(2+) is required as a cofactor. Requires Mn(2+) as cofactor.

The catalysed reaction is NAD(+) + (deoxyribonucleotide)n-3'-hydroxyl + 5'-phospho-(deoxyribonucleotide)m = (deoxyribonucleotide)n+m + AMP + beta-nicotinamide D-nucleotide.. Functionally, DNA ligase that catalyzes the formation of phosphodiester linkages between 5'-phosphoryl and 3'-hydroxyl groups in double-stranded DNA using NAD as a coenzyme and as the energy source for the reaction. It is essential for DNA replication and repair of damaged DNA. This is DNA ligase from Vibrio cholerae serotype O1 (strain ATCC 39315 / El Tor Inaba N16961).